A 514-amino-acid chain; its full sequence is 2,3-bisphosphoglycerate-independent phosphoglycerate mutase (514 aa).

The Mn(2+) site is built by aspartate 14 and serine 64. Serine 64 acts as the Phosphoserine intermediate in catalysis. Substrate contacts are provided by residues histidine 125, 155 to 156 (RD), arginine 187, arginine 193, 263 to 266 (RADR), and lysine 337. The Mn(2+) site is built by aspartate 404, histidine 408, aspartate 445, histidine 446, and histidine 464.

The protein belongs to the BPG-independent phosphoglycerate mutase family. Monomer. Mn(2+) is required as a cofactor.

The catalysed reaction is (2R)-2-phosphoglycerate = (2R)-3-phosphoglycerate. The protein operates within carbohydrate degradation; glycolysis; pyruvate from D-glyceraldehyde 3-phosphate: step 3/5. In terms of biological role, catalyzes the interconversion of 2-phosphoglycerate and 3-phosphoglycerate. This Serratia proteamaculans (strain 568) protein is 2,3-bisphosphoglycerate-independent phosphoglycerate mutase.